Consider the following 258-residue polypeptide: 6-phosphogluconolactonase (258 aa).

Ala-2 is modified (N-acetylalanine). Ser-49 is modified (phosphoserine). An N6-acetyllysine modification is found at Lys-180.

This sequence belongs to the glucosamine/galactosamine-6-phosphate isomerase family. 6-phosphogluconolactonase subfamily.

It is found in the cytoplasm. The catalysed reaction is 6-phospho-D-glucono-1,5-lactone + H2O = 6-phospho-D-gluconate + H(+). Its pathway is carbohydrate degradation; pentose phosphate pathway; D-ribulose 5-phosphate from D-glucose 6-phosphate (oxidative stage): step 2/3. In terms of biological role, hydrolysis of 6-phosphogluconolactone to 6-phosphogluconate. The polypeptide is 6-phosphogluconolactonase (PGLS) (Bos taurus (Bovine)).